The sequence spans 261 residues: uncharacterized protein (261 aa).

Belongs to the FrhB family.

This is an uncharacterized protein from Methanocaldococcus jannaschii (strain ATCC 43067 / DSM 2661 / JAL-1 / JCM 10045 / NBRC 100440) (Methanococcus jannaschii).